Here is a 208-residue protein sequence, read N- to C-terminus: NADH-ubiquinone oxidoreductase chain 4 (208 aa).

Transmembrane regions (helical) follow at residues 23-43 (VWIN…NLLW), 60-80 (PLSA…LLAS), 93-113 (KLYI…FSAN), 114-134 (ELIM…IIIT), 147-167 (IYFL…LIYI), and 185-205 (PINQ…AFMV).

This sequence belongs to the complex I subunit 4 family. In terms of assembly, core subunit of respiratory chain NADH dehydrogenase (Complex I) which is composed of 45 different subunits.

The protein localises to the mitochondrion inner membrane. It carries out the reaction a ubiquinone + NADH + 5 H(+)(in) = a ubiquinol + NAD(+) + 4 H(+)(out). In terms of biological role, core subunit of the mitochondrial membrane respiratory chain NADH dehydrogenase (Complex I) which catalyzes electron transfer from NADH through the respiratory chain, using ubiquinone as an electron acceptor. Essential for the catalytic activity and assembly of complex I. In Microtus pennsylvanicus (Meadow vole), this protein is NADH-ubiquinone oxidoreductase chain 4 (MT-ND4).